The primary structure comprises 143 residues: Transcriptional regulator MraZ (143 aa).

2 SpoVT-AbrB domains span residues Glu-5–Glu-47 and Ala-76–Leu-119.

The protein belongs to the MraZ family. In terms of assembly, forms oligomers.

The protein resides in the cytoplasm. Its subcellular location is the nucleoid. The polypeptide is Transcriptional regulator MraZ (Carboxydothermus hydrogenoformans (strain ATCC BAA-161 / DSM 6008 / Z-2901)).